We begin with the raw amino-acid sequence, 86 residues long: Conotoxin Lt15a (86 aa).

The first 23 residues, 1–23 (MEKLTILILVATVLLAIQVLVQS), serve as a signal peptide directing secretion. Positions 24–49 (DGENPVKGRVKHYAAKRFSALFRGPR) are excised as a propeptide.

This sequence belongs to the conotoxin O2 superfamily. Contains 4 disulfide bonds. As to expression, expressed by the venom duct.

The protein resides in the secreted. The sequence is that of Conotoxin Lt15a from Conus litteratus (Lettered cone).